Here is a 547-residue protein sequence, read N- to C-terminus: Chaperonin GroEL (547 aa).

ATP-binding positions include 30-33 (TLGP), lysine 51, 87-91 (DGTTT), glycine 415, and aspartate 496.

This sequence belongs to the chaperonin (HSP60) family. In terms of assembly, forms a cylinder of 14 subunits composed of two heptameric rings stacked back-to-back. Interacts with the co-chaperonin GroES.

It localises to the cytoplasm. It carries out the reaction ATP + H2O + a folded polypeptide = ADP + phosphate + an unfolded polypeptide.. Its function is as follows. Together with its co-chaperonin GroES, plays an essential role in assisting protein folding. The GroEL-GroES system forms a nano-cage that allows encapsulation of the non-native substrate proteins and provides a physical environment optimized to promote and accelerate protein folding. This is Chaperonin GroEL from Actinobacillus succinogenes (strain ATCC 55618 / DSM 22257 / CCUG 43843 / 130Z).